The chain runs to 494 residues: Alpha-amylase-related protein (494 aa).

The N-terminal stretch at methionine 1–alanine 20 is a signal peptide. Glutamine 21 is modified (pyrrolidone carboxylic acid). Cysteines 48 and 104 form a disulfide. Ca(2+)-binding residues include asparagine 118, glutamine 169, and aspartate 178. Cysteine 157 and cysteine 171 are joined by a disulfide. Position 206 (arginine 206) interacts with chloride. The active-site Nucleophile is the aspartate 208. Residue histidine 212 participates in Ca(2+) binding. The Proton donor role is filled by glutamate 245. Positions 308 and 343 each coordinate chloride. 3 cysteine pairs are disulfide-bonded: cysteine 376–cysteine 382, cysteine 418–cysteine 441, and cysteine 448–cysteine 460.

It belongs to the glycosyl hydrolase 13 family. In terms of assembly, monomer. It depends on Ca(2+) as a cofactor. The cofactor is chloride.

The protein resides in the secreted. It carries out the reaction Endohydrolysis of (1-&gt;4)-alpha-D-glucosidic linkages in polysaccharides containing three or more (1-&gt;4)-alpha-linked D-glucose units.. In Drosophila dossoui (Fruit fly), this protein is Alpha-amylase-related protein (Amyrel).